Consider the following 323-residue polypeptide: tRNA U34 carboxymethyltransferase (323 aa).

Carboxy-S-adenosyl-L-methionine-binding positions include Lys-91, Trp-105, Lys-110, Gly-130, Ile-181–Glu-182, Met-196, Tyr-200, and Arg-315.

It belongs to the class I-like SAM-binding methyltransferase superfamily. CmoB family. Homotetramer.

The catalysed reaction is carboxy-S-adenosyl-L-methionine + 5-hydroxyuridine(34) in tRNA = 5-carboxymethoxyuridine(34) in tRNA + S-adenosyl-L-homocysteine + H(+). Functionally, catalyzes carboxymethyl transfer from carboxy-S-adenosyl-L-methionine (Cx-SAM) to 5-hydroxyuridine (ho5U) to form 5-carboxymethoxyuridine (cmo5U) at position 34 in tRNAs. The polypeptide is tRNA U34 carboxymethyltransferase (Yersinia pseudotuberculosis serotype O:3 (strain YPIII)).